A 335-amino-acid chain; its full sequence is 2-acylglycerol O-acyltransferase 1 (335 aa).

The next 2 helical transmembrane spans lie at 18–38 (TVAVLQWVLKYLLLGPMSIGI) and 40–60 (VMLIIHNYLFLYIPYLMWLYF). Asn121 and Asn125 each carry an N-linked (GlcNAc...) asparagine glycan. The chain crosses the membrane as a helical span at residues 132–152 (LFPGFTSYLHVLPLWFWCPVF). An N-linked (GlcNAc...) asparagine glycan is attached at Asn180.

Belongs to the diacylglycerol acyltransferase family. As to expression, expressed in stomach and liver.

The protein resides in the endoplasmic reticulum membrane. The catalysed reaction is a 2-acylglycerol + an acyl-CoA = a 1,2-diacylglycerol + CoA. It catalyses the reaction 2-(9Z-octadecenoyl)-glycerol + butanoyl-CoA = 1-butanoyl-2-(9Z-octadecenoyl)-glycerol + CoA. It carries out the reaction 2-(9Z-octadecenoyl)-glycerol + octanoyl-CoA = 1-octanoyl-2-(9Z-octadecenoyl)-glycerol + CoA. The enzyme catalyses 2-(9Z-octadecenoyl)-glycerol + dodecanoyl-CoA = 1-dodecanoyl-2-(9Z-octadecenoyl)-glycerol + CoA. The catalysed reaction is 2-(9Z-octadecenoyl)-glycerol + tetradecanoyl-CoA = 1-tetradecanoyl-2-(9Z-octadecenoyl)-glycerol + CoA. It catalyses the reaction 2-(9Z-octadecenoyl)-glycerol + hexadecanoyl-CoA = 1-hexadecanoyl-2-(9Z-octadecenoyl)-glycerol + CoA. It carries out the reaction 2-(9Z-octadecenoyl)-glycerol + octadecanoyl-CoA = 1-octadecanoyl-2-(9Z-octadecenoyl)-glycerol + CoA. The enzyme catalyses eicosanoyl-CoA + 2-(9Z-octadecenoyl)-glycerol = 1-eicosanoyl-2-(9Z-octadecenoyl)-glycerol + CoA. The catalysed reaction is 2-(9Z-octadecenoyl)-glycerol + (9Z)-octadecenoyl-CoA = 1,2-di-(9Z-octadecenoyl)-glycerol + CoA. It catalyses the reaction 2-(9Z-octadecenoyl)-glycerol + (9Z,12Z)-octadecadienoyl-CoA = 1-(9Z,12Z-octadecadienoyl)-2-(9Z-octadecenoyl)-glycerol + CoA. It carries out the reaction 2-(9Z-octadecenoyl)-glycerol + (5Z,8Z,11Z,14Z)-eicosatetraenoyl-CoA = 1-(5Z,8Z,11Z,14Z-eicosatetraenoyl)-2-(9Z-octadecenoyl)-glycerol + CoA. The enzyme catalyses a 2-acylglycerol + an acyl-CoA = a 1,2-diacyl-sn-glycerol + CoA. The catalysed reaction is a 2-acylglycerol + an acyl-CoA = a 2,3-diacyl-sn-glycerol + CoA. It catalyses the reaction a 1-acylglycerol + an acyl-CoA = a 1,2-diacylglycerol + CoA. It carries out the reaction 1-dodecanoylglycerol + (9Z)-octadecenoyl-CoA = 1-dodecanoyl-2-(9Z-octadecenoyl)-glycerol + CoA. The enzyme catalyses 1-tetradecanoylglycerol + (9Z)-octadecenoyl-CoA = 1-tetradecanoyl-2-(9Z-octadecenoyl)-glycerol + CoA. The catalysed reaction is 1-hexadecanoylglycerol + (9Z)-octadecenoyl-CoA = 1-hexadecanoyl-2-(9Z-octadecenoyl)-glycerol + CoA. It catalyses the reaction 1-(9Z-octadecenoyl)-glycerol + (9Z)-octadecenoyl-CoA = 1,2-di-(9Z-octadecenoyl)-glycerol + CoA. It carries out the reaction 1-(9Z,12Z-octadecadienoyl)-glycerol + (9Z)-octadecenoyl-CoA = 1-(9Z,12Z-octadecadienoyl)-2-(9Z-octadecenoyl)-glycerol + CoA. The enzyme catalyses 1-(9Z,12Z,15Z-octadecatrienoyl)-glycerol + (9Z)-octadecenoyl-CoA = 1-(9Z,12Z,15Z-octadecatrienoyl)-2-(9Z-octadecenoyl)-glycerol + CoA. The catalysed reaction is 1-(5Z,8Z,11Z,14Z-eicosatetraenoyl)-glycerol + (9Z)-octadecenoyl-CoA = 1-(5Z,8Z,11Z,14Z-eicosatetraenoyl)-2-(9Z-octadecenoyl)-glycerol + CoA. It catalyses the reaction a 1-acylglycerol + an acyl-CoA = a 1,3-diacylglycerol + CoA. It carries out the reaction 1-dodecanoylglycerol + (9Z)-octadecenoyl-CoA = 1-dodecanoyl-3-(9Z-octadecenoyl)-glycerol + CoA. The enzyme catalyses 1-hexadecanoylglycerol + (9Z)-octadecenoyl-CoA = 1-(9Z-octadecenoyl)-3-hexadecanoylglycerol + CoA. The catalysed reaction is 1-octadecanoylglycerol + (9Z)-octadecenoyl-CoA = 1-octadecanoyl-3-(9Z-octadecenoyl)-glycerol + CoA. It catalyses the reaction 1-(9Z-octadecenoyl)-sn-glycerol + (9Z)-octadecenoyl-CoA = 1,3-di-(9Z-octadecenoyl)-glycerol + CoA. It carries out the reaction 1-(9Z,12Z-octadecadienoyl)-glycerol + (9Z)-octadecenoyl-CoA = 1-(9Z-octadecenoyl)-3-(9Z,12Z-octadecadienoyl)-glycerol + CoA. The enzyme catalyses 1-(9Z,12Z,15Z-octadecatrienoyl)-glycerol + (9Z)-octadecenoyl-CoA = 1-(9Z,12Z,15Z-octadecatrienoyl)-3-(9Z-octadecenoyl)-glycerol + CoA. The catalysed reaction is a 1-acyl-sn-glycerol + an acyl-CoA = a 1,3-diacyl-sn-glycerol + CoA. It catalyses the reaction a 3-acyl-sn-glycerol + an acyl-CoA = a 1,3-diacyl-sn-glycerol + CoA. It carries out the reaction 3-octadecanoyl-sn-glycerol + (9Z)-octadecenoyl-CoA = 1-(9Z-octadecenoyl)-3-octadecanoyl-sn-glycerol + CoA. It participates in glycerolipid metabolism; triacylglycerol biosynthesis. Functionally, involved in glycerolipid synthesis and lipid metabolism. Catalyzes the formation of diacylglycerol, the precursor of triacylglycerol, by transferring the acyl chain of a fatty acyl-CoA to a monoacylglycerol, mainly at the sn-1 or sn-3 positions. It uses both sn-2-monoacylglycerol (2-acylglycerol) and sn-1-monoacylglycerol (1-acyl-sn-glycerol) equally well as substrates, and uses sn-3-monoacylglycerol (3-acyl-sn-glycerol) with lower efficiency. Probably not involved in absorption of dietary fat in the small intestine. The sequence is that of 2-acylglycerol O-acyltransferase 1 from Homo sapiens (Human).